Reading from the N-terminus, the 378-residue chain is Biotin synthase (378 aa).

The Radical SAM core domain maps to 68–292 (NEVQISTLLS…IAVTRICCPS (225 aa)). 3 residues coordinate [4Fe-4S] cluster: C83, C87, and C90. Residues C129, C160, C220, and R296 each contribute to the [2Fe-2S] cluster site.

The protein belongs to the radical SAM superfamily. Biotin synthase family. Homodimer. The cofactor is [4Fe-4S] cluster. [2Fe-2S] cluster serves as cofactor.

It carries out the reaction (4R,5S)-dethiobiotin + (sulfur carrier)-SH + 2 reduced [2Fe-2S]-[ferredoxin] + 2 S-adenosyl-L-methionine = (sulfur carrier)-H + biotin + 2 5'-deoxyadenosine + 2 L-methionine + 2 oxidized [2Fe-2S]-[ferredoxin]. It participates in cofactor biosynthesis; biotin biosynthesis; biotin from 7,8-diaminononanoate: step 2/2. Functionally, catalyzes the conversion of dethiobiotin (DTB) to biotin by the insertion of a sulfur atom into dethiobiotin via a radical-based mechanism. This is Biotin synthase from Psychrobacter arcticus (strain DSM 17307 / VKM B-2377 / 273-4).